Reading from the N-terminus, the 335-residue chain is Phosphate acyltransferase (335 aa).

This sequence belongs to the PlsX family. As to quaternary structure, homodimer. Probably interacts with PlsY.

It localises to the cytoplasm. It catalyses the reaction a fatty acyl-[ACP] + phosphate = an acyl phosphate + holo-[ACP]. The protein operates within lipid metabolism; phospholipid metabolism. Functionally, catalyzes the reversible formation of acyl-phosphate (acyl-PO(4)) from acyl-[acyl-carrier-protein] (acyl-ACP). This enzyme utilizes acyl-ACP as fatty acyl donor, but not acyl-CoA. The polypeptide is Phosphate acyltransferase (Streptococcus suis (strain 98HAH33)).